The chain runs to 385 residues: Chaperone protein DnaJ (385 aa).

Positions aspartate 5–glycine 72 constitute a J domain. The segment at arginine 26 to lysine 48 is disordered. The segment covering aspartate 35–lysine 48 has biased composition (basic and acidic residues). The CR-type zinc finger occupies glycine 145–glutamine 223. Residues cysteine 158, cysteine 161, cysteine 175, cysteine 178, cysteine 197, cysteine 200, cysteine 211, and cysteine 214 each coordinate Zn(2+). 4 CXXCXGXG motif repeats span residues cysteine 158 to glycine 165, cysteine 175 to glycine 182, cysteine 197 to glycine 204, and cysteine 211 to glycine 218. The segment at phenylalanine 362–lysine 385 is disordered.

It belongs to the DnaJ family. Homodimer. Zn(2+) serves as cofactor.

The protein resides in the cytoplasm. Participates actively in the response to hyperosmotic and heat shock by preventing the aggregation of stress-denatured proteins and by disaggregating proteins, also in an autonomous, DnaK-independent fashion. Unfolded proteins bind initially to DnaJ; upon interaction with the DnaJ-bound protein, DnaK hydrolyzes its bound ATP, resulting in the formation of a stable complex. GrpE releases ADP from DnaK; ATP binding to DnaK triggers the release of the substrate protein, thus completing the reaction cycle. Several rounds of ATP-dependent interactions between DnaJ, DnaK and GrpE are required for fully efficient folding. Also involved, together with DnaK and GrpE, in the DNA replication of plasmids through activation of initiation proteins. The protein is Chaperone protein DnaJ of Leptothrix cholodnii (strain ATCC 51168 / LMG 8142 / SP-6) (Leptothrix discophora (strain SP-6)).